Reading from the N-terminus, the 302-residue chain is Glycine--tRNA ligase alpha subunit (302 aa).

This sequence belongs to the class-II aminoacyl-tRNA synthetase family. In terms of assembly, tetramer of two alpha and two beta subunits.

The protein resides in the cytoplasm. The catalysed reaction is tRNA(Gly) + glycine + ATP = glycyl-tRNA(Gly) + AMP + diphosphate. This Enterococcus faecalis (strain ATCC 700802 / V583) protein is Glycine--tRNA ligase alpha subunit.